Consider the following 820-residue polypeptide: Disintegrin and metalloproteinase domain-containing protein 29 (820 aa).

A signal peptide spans 1–18 (MKMLLLLHCLGVFLSCSG). Positions 19-193 (HIQDEHPQYH…TQKQSSYVGW (175 aa)) are excised as a propeptide. The Extracellular portion of the chain corresponds to 194–674 (WIHFRIVEIV…GPPPKRKKKK (481 aa)). The Peptidase M12B domain occupies 198-390 (RIVEIVVVID…RTKCLLETVH (193 aa)). 2 N-linked (GlcNAc...) asparagine glycosylation sites follow: Asn217 and Asn320. Disulfide bonds link Cys307/Cys384, Cys347/Cys369, and Cys349/Cys354. Residues Asn368, Asn428, Asn469, Asn538, Asn545, Asn558, and Asn564 are each glycosylated (N-linked (GlcNAc...) asparagine). One can recognise a Disintegrin domain in the interval 397–483 (VKRCGNGVVE…KCPDDFYVED (87 aa)). An intrachain disulfide couples Cys455 to Cys475. 3 cysteine pairs are disulfide-bonded: Cys625-Cys636, Cys630-Cys642, and Cys644-Cys653. Residues 625 to 654 (CSPAFCNKRGICNNKHHCHCNYLWDPPNCL) enclose the EGF-like domain. The chain crosses the membrane as a helical span at residues 675 to 695 (KFCYLCILLLIVLFILLCCLY). The Cytoplasmic portion of the chain corresponds to 696 to 820 (RLCKKSKPIK…SQSQPPVTPS (125 aa)). Residues 706 to 820 (KQQDVQTPSA…SQSQPPVTPS (115 aa)) form a disordered region. Basic and acidic residues predominate over residues 715 to 727 (AKEEEKIQRRPHE). Low complexity predominate over residues 738 to 820 (PSQSQPPVTP…SQSQPPVTPS (83 aa)). 9 consecutive repeat copies span residues 739-747 (SQSQPPVTP), 748-756 (SQSHPQVMP), 757-765 (SQSQPPVTP), 766-774 (SQSQPRVMP), 775-783 (SQSQPPVMP), 784-792 (SQSHPQLTP), 793-801 (SQSQPPVTP), 802-810 (SQRQPQLMP), and 811-819 (SQSQPPVTP). The 9 X 9 AA approximate repeats stretch occupies residues 739-819 (SQSQPPVTPS…PSQSQPPVTP (81 aa)).

Expressed specifically in testes.

Its subcellular location is the membrane. Functionally, may be involved in spermatogenesis and fertilization. Seems to be a non catalytic metalloprotease-like protein. This chain is Disintegrin and metalloproteinase domain-containing protein 29 (ADAM29), found in Homo sapiens (Human).